Consider the following 243-residue polypeptide: Phosphoribosyl isomerase A (243 aa).

Residue aspartate 9 is the Proton acceptor of the active site. Aspartate 128 serves as the catalytic Proton donor.

Belongs to the HisA/HisF family.

Its subcellular location is the cytoplasm. The enzyme catalyses 1-(5-phospho-beta-D-ribosyl)-5-[(5-phospho-beta-D-ribosylamino)methylideneamino]imidazole-4-carboxamide = 5-[(5-phospho-1-deoxy-D-ribulos-1-ylimino)methylamino]-1-(5-phospho-beta-D-ribosyl)imidazole-4-carboxamide. The catalysed reaction is N-(5-phospho-beta-D-ribosyl)anthranilate = 1-(2-carboxyphenylamino)-1-deoxy-D-ribulose 5-phosphate. Its pathway is amino-acid biosynthesis; L-histidine biosynthesis; L-histidine from 5-phospho-alpha-D-ribose 1-diphosphate: step 4/9. It functions in the pathway amino-acid biosynthesis; L-tryptophan biosynthesis; L-tryptophan from chorismate: step 3/5. Its function is as follows. Involved in both the histidine and tryptophan biosynthetic pathways. This Mycolicibacterium paratuberculosis (strain ATCC BAA-968 / K-10) (Mycobacterium paratuberculosis) protein is Phosphoribosyl isomerase A.